A 357-amino-acid polypeptide reads, in one-letter code: Mannonate dehydratase (357 aa).

It belongs to the mannonate dehydratase family. Requires Fe(2+) as cofactor. Mn(2+) serves as cofactor.

It carries out the reaction D-mannonate = 2-dehydro-3-deoxy-D-gluconate + H2O. It functions in the pathway carbohydrate metabolism; pentose and glucuronate interconversion. In terms of biological role, catalyzes the dehydration of D-mannonate. The protein is Mannonate dehydratase of Enterococcus faecalis (strain ATCC 700802 / V583).